Reading from the N-terminus, the 359-residue chain is 3-dehydroquinate synthase (359 aa).

NAD(+) is bound by residues 70–75, 104–108, 128–129, Lys-141, and Lys-150; these read DAEGGK, GAATD, and TT. Residues Glu-183, His-246, and His-262 each contribute to the Zn(2+) site.

It belongs to the sugar phosphate cyclases superfamily. Dehydroquinate synthase family. The cofactor is Co(2+). Requires Zn(2+) as cofactor. It depends on NAD(+) as a cofactor.

Its subcellular location is the cytoplasm. It catalyses the reaction 7-phospho-2-dehydro-3-deoxy-D-arabino-heptonate = 3-dehydroquinate + phosphate. Its pathway is metabolic intermediate biosynthesis; chorismate biosynthesis; chorismate from D-erythrose 4-phosphate and phosphoenolpyruvate: step 2/7. Functionally, catalyzes the conversion of 3-deoxy-D-arabino-heptulosonate 7-phosphate (DAHP) to dehydroquinate (DHQ). This is 3-dehydroquinate synthase from Mycolicibacterium gilvum (strain PYR-GCK) (Mycobacterium gilvum (strain PYR-GCK)).